We begin with the raw amino-acid sequence, 221 residues long: Translation initiation factor 6 (221 aa).

The protein belongs to the eIF-6 family.

Its function is as follows. Binds to the 50S ribosomal subunit and prevents its association with the 30S ribosomal subunit to form the 70S initiation complex. The sequence is that of Translation initiation factor 6 from Cenarchaeum symbiosum (strain A).